We begin with the raw amino-acid sequence, 111 residues long: Phosphoribosyl-ATP pyrophosphatase (111 aa).

It belongs to the PRA-PH family.

The protein resides in the cytoplasm. It carries out the reaction 1-(5-phospho-beta-D-ribosyl)-ATP + H2O = 1-(5-phospho-beta-D-ribosyl)-5'-AMP + diphosphate + H(+). It participates in amino-acid biosynthesis; L-histidine biosynthesis; L-histidine from 5-phospho-alpha-D-ribose 1-diphosphate: step 2/9. The protein is Phosphoribosyl-ATP pyrophosphatase (hisE) of Azospirillum brasilense.